A 198-amino-acid polypeptide reads, in one-letter code: Carnitine operon protein CaiE (198 aa).

The segment at 179–198 (VEENRPRLKGTTDVKPKSAQ) is disordered. A compositionally biased stretch (basic and acidic residues) spans 180 to 198 (EENRPRLKGTTDVKPKSAQ).

The protein belongs to the transferase hexapeptide repeat family.

The protein operates within amine and polyamine metabolism; carnitine metabolism. Functionally, overproduction of CaiE stimulates the activity of CaiB and CaiD. In Salmonella agona (strain SL483), this protein is Carnitine operon protein CaiE.